Here is a 373-residue protein sequence, read N- to C-terminus: Chaperone protein DnaJ (373 aa).

Residues 4–69 (NYYEILEISQ…EKRSIYDRYG (66 aa)) form the J domain. The CR-type zinc-finger motif lies at 133 to 210 (GCKKKIDFSY…CHGNGYEEIK (78 aa)). Positions 146, 149, 162, 165, 184, 187, 198, and 201 each coordinate Zn(2+). 4 CXXCXGXG motif repeats span residues 146–153 (CKSCKGSG), 162–169 (CPHCGGKG), 184–191 (CDHCKGSG), and 198–205 (CKTCHGNG).

The protein belongs to the DnaJ family. Homodimer. Requires Zn(2+) as cofactor.

The protein resides in the cytoplasm. Its function is as follows. Participates actively in the response to hyperosmotic and heat shock by preventing the aggregation of stress-denatured proteins and by disaggregating proteins, also in an autonomous, DnaK-independent fashion. Unfolded proteins bind initially to DnaJ; upon interaction with the DnaJ-bound protein, DnaK hydrolyzes its bound ATP, resulting in the formation of a stable complex. GrpE releases ADP from DnaK; ATP binding to DnaK triggers the release of the substrate protein, thus completing the reaction cycle. Several rounds of ATP-dependent interactions between DnaJ, DnaK and GrpE are required for fully efficient folding. Also involved, together with DnaK and GrpE, in the DNA replication of plasmids through activation of initiation proteins. The protein is Chaperone protein DnaJ of Campylobacter lari (strain RM2100 / D67 / ATCC BAA-1060).